We begin with the raw amino-acid sequence, 938 residues long: Probable outer membrane protein pmp15 (938 aa).

The signal sequence occupies residues 1 to 17 (MRFFCFGMLLPFTFVLA). One can recognise an Autotransporter domain in the interval 659–938 (DEEKGHAASL…YLNVASRMRF (280 aa)).

It belongs to the PMP outer membrane protein family.

It localises to the secreted. The protein localises to the cell wall. It is found in the cell outer membrane. The sequence is that of Probable outer membrane protein pmp15 (pmp15) from Chlamydia pneumoniae (Chlamydophila pneumoniae).